The sequence spans 251 residues: Regulator of G-protein signaling 9-binding protein C (251 aa).

The Cytoplasmic segment spans residues Met-1–Gln-230. 2 coiled-coil regions span residues Leu-53–Arg-94 and Ala-158–Asn-187. A helical; Anchor for type IV membrane protein transmembrane segment spans residues Leu-231–Ile-250. Position 251 (Leu-251) is a topological domain, extracellular.

This sequence belongs to the RGS7BP/RGS9BP family.

The protein resides in the membrane. Regulator of G protein-coupled receptor (GPCR) signaling. Probably acts by regulating the activity of some 'R7' family protein (RGS6, RGS7, RGS9 and/or RGS11). In Xenopus laevis (African clawed frog), this protein is Regulator of G-protein signaling 9-binding protein C (rgs9bp-c).